Here is a 486-residue protein sequence, read N- to C-terminus: Probable transporter MCH1 (486 aa).

The next 6 helical transmembrane spans lie at 31–51, 69–89, 91–111, 132–152, 164–184, and 204–224; these read ISFF…LFSL, FIAS…GYLA, CYGP…SYFV, FGIC…SSLL, LAIS…SQLM, and FFGV…SVVS. Residues 236–260 form a disordered region; that stretch reads EMEEADEESPLMTSRSRHSHHSCED. A helical transmembrane segment spans residues 280-300; sequence FINFLKDKSAWLLLASLILNI. Asparagine 322 carries an N-linked (GlcNAc...) asparagine glycan. A run of 2 helical transmembrane segments spans residues 327–348 and 357–377; these read VSIM…SDYL and ICRV…QFMV. Residue asparagine 390 is glycosylated (N-linked (GlcNAc...) asparagine). Transmembrane regions (helical) follow at residues 395–415 and 417–437; these read GGLF…DMMG and TWGS…IFYG. A glycan (N-linked (GlcNAc...) asparagine) is linked at asparagine 457. The chain crosses the membrane as a helical span at residues 458-478; it reads LTAVGLSVSLILIIIVWKGIW.

This sequence belongs to the major facilitator superfamily.

It is found in the vacuole membrane. Its function is as follows. Probable transporter. The polypeptide is Probable transporter MCH1 (MCH1) (Debaryomyces hansenii (strain ATCC 36239 / CBS 767 / BCRC 21394 / JCM 1990 / NBRC 0083 / IGC 2968) (Yeast)).